The chain runs to 710 residues: Polyribonucleotide nucleotidyltransferase (710 aa).

Residues Asp489 and Asp495 each contribute to the Mg(2+) site. Positions 556–615 constitute a KH domain; sequence PKIDTIKIDVDKIKVVIGKGGETIDKIIAETGVKIDIDDEGNVSIYSSDQAAINRTKEII. The region spanning 625 to 693 is the S1 motif domain; sequence GEVYHAKVVR…EKGRVDASMK (69 aa). Residues 691 to 710 are disordered; that stretch reads SMKALIPRPPKPEKKEEKHD. Residues 700–710 show a composition bias toward basic and acidic residues; it reads PKPEKKEEKHD.

The cofactor is Mg(2+).

The protein resides in the cytoplasm. The enzyme catalyses RNA(n+1) + phosphate = RNA(n) + a ribonucleoside 5'-diphosphate. Its function is as follows. Involved in mRNA degradation. Catalyzes the phosphorolysis of single-stranded polyribonucleotides processively in the 3'- to 5'-direction. The sequence is that of Polyribonucleotide nucleotidyltransferase from Streptococcus pyogenes serotype M6 (strain ATCC BAA-946 / MGAS10394).